We begin with the raw amino-acid sequence, 338 residues long: Beta-ketoacyl-[acyl-carrier-protein] synthase III (338 aa).

Active-site residues include Cys-119 and His-261. An ACP-binding region spans residues 262–266 (QANQR). The active site involves Asn-291.

This sequence belongs to the thiolase-like superfamily. FabH family. In terms of assembly, homodimer.

The protein resides in the cytoplasm. The enzyme catalyses malonyl-[ACP] + acetyl-CoA + H(+) = 3-oxobutanoyl-[ACP] + CO2 + CoA. Its pathway is lipid metabolism; fatty acid biosynthesis. Its function is as follows. Catalyzes the condensation reaction of fatty acid synthesis by the addition to an acyl acceptor of two carbons from malonyl-ACP. Catalyzes the first condensation reaction which initiates fatty acid synthesis and may therefore play a role in governing the total rate of fatty acid production. Possesses both acetoacetyl-ACP synthase and acetyl transacylase activities. Its substrate specificity determines the biosynthesis of branched-chain and/or straight-chain of fatty acids. This is Beta-ketoacyl-[acyl-carrier-protein] synthase III from Prochlorococcus marinus (strain SARG / CCMP1375 / SS120).